A 207-amino-acid chain; its full sequence is LexA repressor (207 aa).

A DNA-binding region (H-T-H motif) is located at residues 28–48 (VREIGEAVGLASSSTVHGHLA). Catalysis depends on for autocatalytic cleavage activity residues Ser-129 and Lys-167.

This sequence belongs to the peptidase S24 family. As to quaternary structure, homodimer.

The catalysed reaction is Hydrolysis of Ala-|-Gly bond in repressor LexA.. Its function is as follows. Represses a number of genes involved in the response to DNA damage (SOS response), including recA and lexA. In the presence of single-stranded DNA, RecA interacts with LexA causing an autocatalytic cleavage which disrupts the DNA-binding part of LexA, leading to derepression of the SOS regulon and eventually DNA repair. The protein is LexA repressor of Geobacillus kaustophilus (strain HTA426).